Reading from the N-terminus, the 101-residue chain is MIPGEILTDDGEHELNAGRATRSLVVANTGDRPVQVGSHYHFFEVNDALSFDRAAARGFRLNIAAGTAVRFEPGQTRTVELVALAGERAVYGFQGKVMGPL.

Belongs to the urease beta subunit family. As to quaternary structure, heterotrimer of UreA (gamma), UreB (beta) and UreC (alpha) subunits. Three heterotrimers associate to form the active enzyme.

It localises to the cytoplasm. The catalysed reaction is urea + 2 H2O + H(+) = hydrogencarbonate + 2 NH4(+). The protein operates within nitrogen metabolism; urea degradation; CO(2) and NH(3) from urea (urease route): step 1/1. This chain is Urease subunit beta, found in Burkholderia cenocepacia (strain ATCC BAA-245 / DSM 16553 / LMG 16656 / NCTC 13227 / J2315 / CF5610) (Burkholderia cepacia (strain J2315)).